Here is a 285-residue protein sequence, read N- to C-terminus: Sulfotransferase 2A6 (285 aa).

Residue 44–49 (KSGTNW) coordinates 3'-phosphoadenylyl sulfate. Residue His-99 is the Proton acceptor of the active site. Residues Arg-121, Ser-129, Tyr-184, 218–223 (SSFQAM), and 247–249 (RKG) contribute to the 3'-phosphoadenylyl sulfate site.

The protein belongs to the sulfotransferase 1 family. In terms of assembly, oligomer.

It localises to the cytoplasm. The protein resides in the cytosol. The catalysed reaction is an alcohol + 3'-phosphoadenylyl sulfate = an alkyl sulfate + adenosine 3',5'-bisphosphate + H(+). The enzyme catalyses glycolithocholate + 3'-phosphoadenylyl sulfate = sulfoglycolithocholate + adenosine 3',5'-bisphosphate + H(+). It catalyses the reaction taurolithocholate + 3'-phosphoadenylyl sulfate = taurolithocholate 3-sulfate + adenosine 3',5'-bisphosphate + H(+). It carries out the reaction 3beta-hydroxyandrost-5-en-17-one + 3'-phosphoadenylyl sulfate = dehydroepiandrosterone 3-sulfate + adenosine 3',5'-bisphosphate + H(+). In terms of biological role, sulfotransferase that utilizes 3'-phospho-5'-adenylyl sulfate (PAPS) as sulfonate donor to catalyze the sulfonation of the hydroxyl group of hydroxysteroids and bile acids. This is Sulfotransferase 2A6 from Mus musculus (Mouse).